The chain runs to 103 residues: Small ribosomal subunit protein uS10 (103 aa).

It belongs to the universal ribosomal protein uS10 family. Part of the 30S ribosomal subunit.

Involved in the binding of tRNA to the ribosomes. The chain is Small ribosomal subunit protein uS10 from Hahella chejuensis (strain KCTC 2396).